The chain runs to 309 residues: Dihydroorotate dehydrogenase B (NAD(+)), catalytic subunit (309 aa).

FMN-binding positions include Ser-21 and 45 to 46 (KA). Residues Lys-45 and 69-73 (NAIGL) each bind substrate. FMN-binding residues include Asn-99 and Asn-127. Asn-127 contacts substrate. Cys-130 acts as the Nucleophile in catalysis. 2 residues coordinate FMN: Lys-165 and Ile-191. Residue 192 to 193 (NT) coordinates substrate. FMN is bound by residues Gly-217, 243–244 (GG), and 265–266 (GT).

Belongs to the dihydroorotate dehydrogenase family. Type 1 subfamily. As to quaternary structure, heterotetramer of 2 PyrK and 2 PyrD type B subunits. Requires FMN as cofactor.

It localises to the cytoplasm. The enzyme catalyses (S)-dihydroorotate + NAD(+) = orotate + NADH + H(+). It functions in the pathway pyrimidine metabolism; UMP biosynthesis via de novo pathway; orotate from (S)-dihydroorotate (NAD(+) route): step 1/1. Catalyzes the conversion of dihydroorotate to orotate with NAD(+) as electron acceptor. The polypeptide is Dihydroorotate dehydrogenase B (NAD(+)), catalytic subunit (pyrD) (Exiguobacterium sibiricum (strain DSM 17290 / CCUG 55495 / CIP 109462 / JCM 13490 / 255-15)).